The sequence spans 611 residues: Dual specificity protein phosphatase CDC14AB (611 aa).

The tract at residues 23–178 is a; the sequence is DLLGASEFIK…ALQHGFLNFE (156 aa). Positions 179-192 are linker; sequence TFDVNEYEHYERVE. The interval 193–359 is b; the sequence is NGDLNWITPG…HGDSLRSKQR (167 aa). Positions 194–352 constitute a Tyrosine-protein phosphatase domain; that stretch reads GDLNWITPGK…KQASLWAHGD (159 aa). Cysteine 294 (phosphocysteine intermediate) is an active-site residue. The disordered stretch occupies residues 408-611; sequence KLRALKGRRQ…PSLQSEYVQY (204 aa). The span at 456–490 shows a compositional bias: low complexity; it reads SPLKSSKVPASSSSSSSSSSVSASAKRIGRSSSSS. Residues 491-511 are compositionally biased toward polar residues; that stretch reads TNLKSTRLASSLGNLYEPNTE. Over residues 512–553 the composition is skewed to low complexity; the sequence is SISSGKPPSPSSFTPHPVRTTYNYHYEVNNNNNQYSTTSSPS. 2 stretches are compositionally biased toward polar residues: residues 554 to 569 and 591 to 611; these read KSLG…SGAS and GLST…YVQY.

Belongs to the protein-tyrosine phosphatase family. Non-receptor class CDC14 subfamily.

Its subcellular location is the nucleus. The protein resides in the cytoplasm. It localises to the cytoskeleton. It is found in the microtubule organizing center. The protein localises to the centrosome. Its subcellular location is the spindle pole. The protein resides in the spindle. It localises to the cell projection. It is found in the kinocilium. The enzyme catalyses O-phospho-L-tyrosyl-[protein] + H2O = L-tyrosyl-[protein] + phosphate. It catalyses the reaction O-phospho-L-seryl-[protein] + H2O = L-seryl-[protein] + phosphate. The catalysed reaction is O-phospho-L-threonyl-[protein] + H2O = L-threonyl-[protein] + phosphate. Dual-specificity phosphatase. Required for centrosome separation and productive cytokinesis during cell division. Dephosphorylates SIRT2 around early anaphase. May dephosphorylate the APC subunit FZR1/CDH1, thereby promoting APC-FZR1 dependent degradation of mitotic cyclins and subsequent exit from mitosis. The sequence is that of Dual specificity protein phosphatase CDC14AB (cdc14ab) from Danio rerio (Zebrafish).